A 432-amino-acid chain; its full sequence is Phosphomethylpyrimidine synthase (432 aa).

Residues Asn-66, Met-95, Tyr-124, His-163, Ser-185 to Gly-187, Asp-226 to Arg-229, and Glu-265 each bind substrate. A Zn(2+)-binding site is contributed by His-269. Tyr-292 contacts substrate. Position 333 (His-333) interacts with Zn(2+). Residues Cys-409, Cys-412, and Cys-416 each coordinate [4Fe-4S] cluster.

Belongs to the ThiC family. The cofactor is [4Fe-4S] cluster.

The catalysed reaction is 5-amino-1-(5-phospho-beta-D-ribosyl)imidazole + S-adenosyl-L-methionine = 4-amino-2-methyl-5-(phosphooxymethyl)pyrimidine + CO + 5'-deoxyadenosine + formate + L-methionine + 3 H(+). The protein operates within cofactor biosynthesis; thiamine diphosphate biosynthesis. In terms of biological role, catalyzes the synthesis of the hydroxymethylpyrimidine phosphate (HMP-P) moiety of thiamine from aminoimidazole ribotide (AIR) in a radical S-adenosyl-L-methionine (SAM)-dependent reaction. This is Phosphomethylpyrimidine synthase from Moorella thermoacetica (strain ATCC 39073 / JCM 9320).